A 426-amino-acid polypeptide reads, in one-letter code: Divalent metal cation transporter MntH (426 aa).

10 helical membrane-spanning segments follow: residues 31-51, 58-78, 134-156, 169-189, 208-228, 256-276, 298-318, 337-357, 363-383, and 402-422; these read WYLL…GNVA, AQFG…AGLV, ILFR…LLLM, VITG…FVAT, SVLL…VYLH, VILA…VAAI, LGAT…LASA, IPML…LALG, ALVL…LPLV, and TVLG…LIYL.

The protein belongs to the NRAMP family.

The protein localises to the cell membrane. In terms of biological role, h(+)-stimulated, divalent metal cation uptake system. This Mycobacterium leprae (strain TN) protein is Divalent metal cation transporter MntH.